A 293-amino-acid chain; its full sequence is Inner membrane ABC transporter permease protein YcjO (293 aa).

Over 1 to 12 the chain is Periplasmic; that stretch reads MNRLFSGRSDMP. A helical transmembrane segment spans residues 13-33; the sequence is FALLLLAPSLLLLGGLVAWPM. Residues 34–77 are Cytoplasmic-facing; sequence VSNIEISFLRLPLNPNIESTFVGVSNYVRILSDPGFWHSLWMTV. Residues 73–283 enclose the ABC transmembrane type-1 domain; it reads LWMTVWYTAL…IIIFAVILLT (211 aa). Residues 78 to 98 traverse the membrane as a helical segment; that stretch reads WYTALVVAGSTVLGLAVAMFF. Residues 99 to 110 are Periplasmic-facing; that stretch reads NREFRLRKTARS. A helical membrane pass occupies residues 111 to 131; sequence LVILSYVTPSISLVFAWKYMF. Over 132–135 the chain is Cytoplasmic; sequence NNGY. A helical transmembrane segment spans residues 136-156; sequence GIVNYLGVDLLHLYEQAPLWF. At 157 to 162 the chain is on the periplasmic side; it reads DNPGSS. The helical transmembrane segment at 163–183 threads the bilayer; that stretch reads FVLVVLFAIWRYFPYAFISFL. The Cytoplasmic portion of the chain corresponds to 184–214; it reads AILQTIDKSLYEAAEMDGANAWQRFRIVTLP. Residues 215–235 traverse the membrane as a helical segment; sequence AIMPVLATVVTLRTIWMFYMF. The Periplasmic portion of the chain corresponds to 236-261; the sequence is ADVYLLTTKVDILGVYLYKTAFAFND. Residues 262 to 282 traverse the membrane as a helical segment; it reads LGKAAAISVVLFIIIFAVILL. The Cytoplasmic portion of the chain corresponds to 283-293; that stretch reads TRKRVNLNGNK.

This sequence belongs to the binding-protein-dependent transport system permease family. MalFG subfamily.

It localises to the cell inner membrane. In terms of biological role, probably part of the binding-protein-dependent transport system YcjNOP. Probably responsible for the translocation of the substrate across the membrane. The sequence is that of Inner membrane ABC transporter permease protein YcjO (ycjO) from Escherichia coli (strain K12).